The primary structure comprises 526 residues: Bifunctional purine biosynthesis protein PurH (526 aa).

The MGS-like domain maps to 1–148 (MQRPIIIRRA…KNYSNVVVVV (148 aa)).

This sequence belongs to the PurH family.

It carries out the reaction (6R)-10-formyltetrahydrofolate + 5-amino-1-(5-phospho-beta-D-ribosyl)imidazole-4-carboxamide = 5-formamido-1-(5-phospho-D-ribosyl)imidazole-4-carboxamide + (6S)-5,6,7,8-tetrahydrofolate. The catalysed reaction is IMP + H2O = 5-formamido-1-(5-phospho-D-ribosyl)imidazole-4-carboxamide. It functions in the pathway purine metabolism; IMP biosynthesis via de novo pathway; 5-formamido-1-(5-phospho-D-ribosyl)imidazole-4-carboxamide from 5-amino-1-(5-phospho-D-ribosyl)imidazole-4-carboxamide (10-formyl THF route): step 1/1. The protein operates within purine metabolism; IMP biosynthesis via de novo pathway; IMP from 5-formamido-1-(5-phospho-D-ribosyl)imidazole-4-carboxamide: step 1/1. The chain is Bifunctional purine biosynthesis protein PurH from Baumannia cicadellinicola subsp. Homalodisca coagulata.